A 144-amino-acid polypeptide reads, in one-letter code: MYSEIQRERADIEGLMARPEYREWNSELIKPKKLLNPVKASRSHQELHRELLMNHKRGLGMDSKPELQRVLEHRRRNQLIKKKEEELEAKRMQCPFKQELLRRQQRLNQLENPPQRDEDHAPEFIKVRENLRRITTLTSEERAL.

The stretch at 70–90 (VLEHRRRNQLIKKKEEELEAK) forms a coiled coil. The short motif at 74 to 84 (RRRNQLIKKKE) is the Nuclear localization signal element. Residues 104–123 (QQRLNQLENPPQRDEDHAPE) form a disordered region. Positions 114-123 (PQRDEDHAPE) are enriched in basic and acidic residues.

In terms of assembly, interacts with ACTB. Interacts with F-actin. Interacts with PRDX1. Interacts with COMMD1; this interaction stabilizes COMMD1 in the nucleus. Interacts with MAP1A. In terms of tissue distribution, expressed in septum, the neocortex, the CA3 region of the hippocampus and the cerebellum (at protein level).

It localises to the nucleus. The protein resides in the cytoplasm. The protein localises to the cytoskeleton. It is found in the stress fiber. Its subcellular location is the cell junction. It localises to the focal adhesion. The protein resides in the cell projection. The protein localises to the ruffle membrane. It is found in the synapse. Stress-inducible actin-binding protein that plays a role in synaptic and cognitive functions by modulating actin filamentous (F-actin) dynamics. Mediates polymerization of globular actin to F-actin. Also binds to, stabilizes and bundles F-actin. Involved in synaptic function by regulating neurite outgrowth in an actin-dependent manner and for the acquisition of hippocampus-dependent cognitive function, such as learning and long-term memory. Plays a role in the actin and microtubule cytoskeleton organization; negatively regulates focal adhesion (FA) assembly promoting malignant glial cell migration in an actin-, microtubule- and MAP1A-dependent manner. Also involved in neuroblastoma G1/S phase cell cycle progression and cell proliferation inhibition by stimulating ubiquitination of NF-kappa-B subunit RELA and NF-kappa-B degradation in a COMMD1- and actin-dependent manner. May play a role in tumor development. The sequence is that of Actin-associated protein FAM107A from Mus musculus (Mouse).